Here is a 313-residue protein sequence, read N- to C-terminus: Metaxin-3 (313 aa).

The segment at 280–313 is disordered; sequence EKMDDNLRSSPQHRPHRHEAKPSAPASDRNSTPA.

This sequence belongs to the metaxin family. In terms of assembly, part of a large protein complex spanning both mitochondrial membranes termed the mitochondrial intermembrane space bridging (MIB) complex.

Its subcellular location is the mitochondrion. The protein resides in the mitochondrion outer membrane. In terms of biological role, could function in transport of proteins into the mitochondrion. In Danio rerio (Zebrafish), this protein is Metaxin-3 (mtx3).